We begin with the raw amino-acid sequence, 348 residues long: UPF0283 membrane protein HAPS_0079 (348 aa).

3 helical membrane passes run phenylalanine 57–isoleucine 77, isoleucine 86–isoleucine 106, and glutamate 203–tryptophan 223.

Belongs to the UPF0283 family.

The protein resides in the cell inner membrane. In Glaesserella parasuis serovar 5 (strain SH0165) (Haemophilus parasuis), this protein is UPF0283 membrane protein HAPS_0079.